Reading from the N-terminus, the 479-residue chain is Zinc metalloproteinase/disintegrin PMMP-1 (479 aa).

The signal sequence occupies residues 1 to 20; that stretch reads MIQVLLVTICLAVFPYQGSS. A propeptide spanning residues 21–188 is cleaved from the precursor; it reads IILESGNVND…PIKKASKLVV (168 aa). Residues 194–390 enclose the Peptidase M12B domain; that stretch reads RYVELVIVAD…HNPQCILNKP (197 aa). Disulfide bonds link C305–C385, C345–C369, and C347–C352. Residue H330 participates in Zn(2+) binding. Residue E331 is part of the active site. Positions 334 and 339 each coordinate Zn(2+). N-linked (GlcNAc...) asparagine glycosylation is present at N368. A propeptide spanning residues 391-408 is cleaved from the precursor; sequence LRTDTVSTPVSGNELLEA. In terms of domain architecture, Disintegrin spans 398–479; sequence TPVSGNELLE…ADCPRNGLYG (82 aa). Intrachain disulfides connect C412–C427, C414–C422, C421–C444, C435–C441, C440–C465, and C453–C472. The Cell attachment site motif lies at 457-459; that stretch reads RGD.

This sequence belongs to the venom metalloproteinase (M12B) family. P-II subfamily. P-IIa sub-subfamily. Monomer. Zn(2+) serves as cofactor. In terms of tissue distribution, expressed by the venom gland.

It localises to the secreted. In terms of biological role, impairs hemostasis in the envenomed animal. Functionally, inhibits platelet aggregation. In Protobothrops mucrosquamatus (Taiwan habu), this protein is Zinc metalloproteinase/disintegrin PMMP-1.